The following is a 348-amino-acid chain: Anthranilate phosphoribosyltransferase (348 aa).

Residues Gly84, 87 to 88, Thr92, 94 to 97, 112 to 120, and Ser124 each bind 5-phospho-alpha-D-ribose 1-diphosphate; these read GD, NITT, and KHGNRSVSS. Gly84 lines the anthranilate pocket. Thr96 is a binding site for Mg(2+). Asn115 provides a ligand contact to anthranilate. Arg170 contacts anthranilate. Positions 228 and 229 each coordinate Mg(2+).

The protein belongs to the anthranilate phosphoribosyltransferase family. As to quaternary structure, homodimer. It depends on Mg(2+) as a cofactor.

The catalysed reaction is N-(5-phospho-beta-D-ribosyl)anthranilate + diphosphate = 5-phospho-alpha-D-ribose 1-diphosphate + anthranilate. It functions in the pathway amino-acid biosynthesis; L-tryptophan biosynthesis; L-tryptophan from chorismate: step 2/5. Its function is as follows. Catalyzes the transfer of the phosphoribosyl group of 5-phosphorylribose-1-pyrophosphate (PRPP) to anthranilate to yield N-(5'-phosphoribosyl)-anthranilate (PRA). The sequence is that of Anthranilate phosphoribosyltransferase from Corynebacterium glutamicum (strain R).